Consider the following 551-residue polypeptide: Palmdelphin (551 aa).

Residue Met-1 is modified to N-acetylmethionine. Positions 12 to 106 (QAITDKRKIQ…LQISANEEAI (95 aa)) form a coiled coil. Lys-125 participates in a covalent cross-link: Glycyl lysine isopeptide (Lys-Gly) (interchain with G-Cter in SUMO2). Phosphoserine is present on Ser-135. Lys-178 is covalently cross-linked (Glycyl lysine isopeptide (Lys-Gly) (interchain with G-Cter in SUMO1); alternate). Lys-178 is covalently cross-linked (Glycyl lysine isopeptide (Lys-Gly) (interchain with G-Cter in SUMO2); alternate). Residues 247-258 (ERNSKSPTEYHE) are compositionally biased toward basic and acidic residues. Residues 247–266 (ERNSKSPTEYHEPVYANPFC) are disordered. Thr-270 is subject to Phosphothreonine. Disordered regions lie at residues 294–390 (LGNH…TCQE) and 451–533 (AEDN…GTED). 2 positions are modified to phosphoserine: Ser-321 and Ser-349. The segment covering 341 to 353 (HTQQKRMASPWEE) has biased composition (polar residues). Over residues 354-365 (SSNRQNEHEVSP) the composition is skewed to basic and acidic residues. 7 positions are modified to phosphoserine: Ser-370, Ser-375, Ser-384, Ser-385, Ser-498, Ser-515, and Ser-520.

It belongs to the paralemmin family. In terms of assembly, interacts with GLUL. Phosphorylated. Ubiquitous. Expressed at highest levels in the heart and lung.

It localises to the cytoplasm. Its subcellular location is the cell projection. It is found in the dendrite. The protein localises to the dendritic spine. This Mus musculus (Mouse) protein is Palmdelphin (Palmd).